Consider the following 384-residue polypeptide: Erythronate-4-phosphate dehydrogenase (384 aa).

Substrate-binding residues include serine 45 and threonine 66. NAD(+) contacts are provided by aspartate 147 and threonine 177. Arginine 210 is a catalytic residue. Aspartate 234 contributes to the NAD(+) binding site. The active site involves glutamate 239. Histidine 256 serves as the catalytic Proton donor. Glycine 259 contributes to the NAD(+) binding site. A substrate-binding site is contributed by tyrosine 260.

It belongs to the D-isomer specific 2-hydroxyacid dehydrogenase family. PdxB subfamily. Homodimer.

It is found in the cytoplasm. The catalysed reaction is 4-phospho-D-erythronate + NAD(+) = (R)-3-hydroxy-2-oxo-4-phosphooxybutanoate + NADH + H(+). Its pathway is cofactor biosynthesis; pyridoxine 5'-phosphate biosynthesis; pyridoxine 5'-phosphate from D-erythrose 4-phosphate: step 2/5. Catalyzes the oxidation of erythronate-4-phosphate to 3-hydroxy-2-oxo-4-phosphonooxybutanoate. The protein is Erythronate-4-phosphate dehydrogenase of Marinobacter nauticus (strain ATCC 700491 / DSM 11845 / VT8) (Marinobacter aquaeolei).